The primary structure comprises 315 residues: GPN-loop GTPase 2 (315 aa).

12–17 (GSGKST) lines the GTP pocket. A Gly-Pro-Asn (GPN)-loop; involved in dimer interface motif is present at residues 69 to 71 (GPN). 172–175 (SKAD) is a binding site for GTP.

It belongs to the GPN-loop GTPase family. Heterodimers with gpn1 or fet5/gpn3. Binds to RNA polymerase II (RNAPII).

Its subcellular location is the cytoplasm. It is found in the nucleus. In terms of biological role, small GTPase required for proper nuclear import of RNA polymerase II and III (RNAPII and RNAPIII). May act at an RNAP assembly step prior to nuclear import. The protein is GPN-loop GTPase 2 of Schizosaccharomyces pombe (strain 972 / ATCC 24843) (Fission yeast).